The following is a 180-amino-acid chain: uncharacterized protein (180 aa).

A Nudix hydrolase domain is found at 35–163; the sequence is LRHRATYIVV…TPDSLKALAL (129 aa). The short motif at 72–94 is the Nudix box element; it reads GGVVQADEQLLESARREAEEELG. Glutamate 88 and glutamate 92 together coordinate Mg(2+).

It belongs to the Nudix hydrolase family. Requires Mg(2+) as cofactor.

This is an uncharacterized protein from Shigella flexneri.